The primary structure comprises 95 residues: Small ribosomal subunit protein uS17 (95 aa).

This sequence belongs to the universal ribosomal protein uS17 family. As to quaternary structure, part of the 30S ribosomal subunit.

One of the primary rRNA binding proteins, it binds specifically to the 5'-end of 16S ribosomal RNA. In Streptomyces coelicolor (strain ATCC BAA-471 / A3(2) / M145), this protein is Small ribosomal subunit protein uS17.